We begin with the raw amino-acid sequence, 322 residues long: ATP-dependent 6-phosphofructokinase (322 aa).

Residue Gly-11 coordinates ATP. Residue 21 to 25 (RAVTR) coordinates ADP. ATP contacts are provided by residues 72-73 (RC) and 102-105 (GDGS). Asp-103 lines the Mg(2+) pocket. Residue 127 to 129 (TID) coordinates substrate. Asp-129 acts as the Proton acceptor in catalysis. Position 156 (Arg-156) interacts with ADP. Residues Arg-164 and 171–173 (MGR) contribute to the substrate site. Residues 187 to 189 (GAE), Arg-213, and 215 to 217 (KKH) contribute to the ADP site. Substrate-binding positions include Glu-224, Arg-245, and 251-254 (HIQR).

This sequence belongs to the phosphofructokinase type A (PFKA) family. ATP-dependent PFK group I subfamily. Prokaryotic clade 'B1' sub-subfamily. As to quaternary structure, homotetramer. Requires Mg(2+) as cofactor.

It is found in the cytoplasm. The catalysed reaction is beta-D-fructose 6-phosphate + ATP = beta-D-fructose 1,6-bisphosphate + ADP + H(+). The protein operates within carbohydrate degradation; glycolysis; D-glyceraldehyde 3-phosphate and glycerone phosphate from D-glucose: step 3/4. Allosterically activated by ADP and other diphosphonucleosides, and allosterically inhibited by phosphoenolpyruvate. Functionally, catalyzes the phosphorylation of D-fructose 6-phosphate to fructose 1,6-bisphosphate by ATP, the first committing step of glycolysis. The chain is ATP-dependent 6-phosphofructokinase from Staphylococcus epidermidis (strain ATCC 35984 / DSM 28319 / BCRC 17069 / CCUG 31568 / BM 3577 / RP62A).